The following is a 257-amino-acid chain: Imidazole glycerol phosphate synthase subunit HisF (257 aa).

Catalysis depends on residues Asp12 and Asp131.

Belongs to the HisA/HisF family. As to quaternary structure, heterodimer of HisH and HisF.

It is found in the cytoplasm. The enzyme catalyses 5-[(5-phospho-1-deoxy-D-ribulos-1-ylimino)methylamino]-1-(5-phospho-beta-D-ribosyl)imidazole-4-carboxamide + L-glutamine = D-erythro-1-(imidazol-4-yl)glycerol 3-phosphate + 5-amino-1-(5-phospho-beta-D-ribosyl)imidazole-4-carboxamide + L-glutamate + H(+). Its pathway is amino-acid biosynthesis; L-histidine biosynthesis; L-histidine from 5-phospho-alpha-D-ribose 1-diphosphate: step 5/9. Its function is as follows. IGPS catalyzes the conversion of PRFAR and glutamine to IGP, AICAR and glutamate. The HisF subunit catalyzes the cyclization activity that produces IGP and AICAR from PRFAR using the ammonia provided by the HisH subunit. This is Imidazole glycerol phosphate synthase subunit HisF from Paraburkholderia phytofirmans (strain DSM 17436 / LMG 22146 / PsJN) (Burkholderia phytofirmans).